The sequence spans 1440 residues: Gag-Pro-Pol polyprotein (1440 aa).

Residue Gly2 is the site of N-myristoyl glycine; by host attachment. The tract at residues 95 to 116 (EAPPSAPLAEDPQKPPPYPEQA) is disordered. Residues 98–101 (PSAP) carry the PTAP/PSAP motif motif. The short motif at 109-112 (PPPY) is the PPXY motif element. 2 consecutive CCHC-type zinc fingers follow at residues 349–366 (QPCFRCGQVGHWSRDCKQ) and 372–389 (GPCPVCQDPTHWKRDCPQ). In terms of domain architecture, Peptidase A2 spans 457-535 (VQALLDTGAD…NQWTILGRDA (79 aa)). The For protease activity; shared with dimeric partner role is filled by Asp462. The 191-residue stretch at 593 to 783 (LEAKHIEPYQ…GPIHFLGQVI (191 aa)) folds into the Reverse transcriptase domain. Mg(2+) contacts are provided by Asp659, Asp734, Asp735, Asp1019, Glu1052, Asp1074, Asp1135, Asp1208, and Asp1265. Positions 1010–1143 (INHAPCLFSD…TDALMLAPLL (134 aa)) constitute an RNase H type-1 domain. Residues 1197–1366 (RGHAPNDIWQ…PPVPEDTLPP (170 aa)) form the Integrase catalytic domain. A DNA-binding region (integrase-type) is located at residues 1371 to 1420 (KWYYYKIPGLTNSRWSGPVQSLKEAAGAALIPVGGSYLWIPWRLLKRGIC).

Interacts with human TSG101. This interaction is essential for budding and release of viral particles. It depends on Mg(2+) as a cofactor. Specific enzymatic cleavages by the viral protease yield mature proteins. The polyprotein is cleaved during and after budding, this process is termed maturation. The protease is autoproteolytically processed at its N- and C-termini.

Its subcellular location is the virion. It catalyses the reaction Endonucleolytic cleavage to 5'-phosphomonoester.. It carries out the reaction DNA(n) + a 2'-deoxyribonucleoside 5'-triphosphate = DNA(n+1) + diphosphate. Functionally, matrix protein p19 targets Gag, Gag-Pro and Gag-Pro-Pol polyproteins to the plasma membrane via a multipartite membrane binding signal, that includes its myristoylated N-terminus. Also mediates nuclear localization of the preintegration complex. Capsid protein p24 forms the conical core of the virus that encapsulates the genomic RNA-nucleocapsid complex. Its function is as follows. Nucleocapsid protein p15 is involved in the packaging and encapsidation of two copies of the genome. In terms of biological role, the aspartyl protease mediates proteolytic cleavages of Gag, Gag-Pro and Gag-Pro-Pol polyproteins during or shortly after the release of the virion from the plasma membrane. Cleavages take place as an ordered, step-wise cascade to yield mature proteins. This process is called maturation. Displays maximal activity during the budding process just prior to particle release from the cell. Hydrolyzes host EIF4GI in order to shut off the capped cellular mRNA translation. The resulting inhibition of cellular protein synthesis serves to ensure maximal viral gene expression and to evade host immune response. Functionally, reverse transcriptase (RT) is a multifunctional enzyme that converts the viral RNA genome into dsDNA in the cytoplasm, shortly after virus entry into the cell. This enzyme displays a DNA polymerase activity that can copy either DNA or RNA templates, and a ribonuclease H (RNase H) activity that cleaves the RNA strand of RNA-DNA heteroduplexes in a partially processive 3' to 5'-endonucleasic mode. Conversion of viral genomic RNA into dsDNA requires many steps. A tRNA-Pro binds to the primer-binding site (PBS) situated at the 5'-end of the viral RNA. RT uses the 3' end of the tRNA primer to perform a short round of RNA-dependent minus-strand DNA synthesis. The reading proceeds through the U5 region and ends after the repeated (R) region which is present at both ends of viral RNA. The portion of the RNA-DNA heteroduplex is digested by the RNase H, resulting in a ssDNA product attached to the tRNA primer. This ssDNA/tRNA hybridizes with the identical R region situated at the 3' end of viral RNA. This template exchange, known as minus-strand DNA strong stop transfer, can be either intra- or intermolecular. RT uses the 3' end of this newly synthesized short ssDNA to perform the RNA-dependent minus-strand DNA synthesis of the whole template. RNase H digests the RNA template except for a polypurine tract (PPT) situated at the 5' end of the genome. It is not clear if both polymerase and RNase H activities are simultaneous. RNase H probably can proceed both in a polymerase-dependent (RNA cut into small fragments by the same RT performing DNA synthesis) and a polymerase-independent mode (cleavage of remaining RNA fragments by free RTs). Secondly, RT performs DNA-directed plus-strand DNA synthesis using the PPT that has not been removed by RNase H as primer. PPT and tRNA primers are then removed by RNase H. The 3' and 5' ssDNA PBS regions hybridize to form a circular dsDNA intermediate. Strand displacement synthesis by RT to the PBS and PPT ends produces a blunt ended, linear dsDNA copy of the viral genome that includes long terminal repeats (LTRs) at both ends. Integrase catalyzes viral DNA integration into the host chromosome, by performing a series of DNA cutting and joining reactions. This enzyme activity takes place after virion entry into a cell and reverse transcription of the RNA genome in dsDNA. The first step in the integration process is 3' processing. This step requires a complex comprising the viral genome, matrix protein, and integrase. This complex is called the pre-integration complex (PIC). The integrase protein removes 2 nucleotides from each 3' end of the viral DNA, leaving recessed dinucleotides OH's at the 3' ends. In the second step, the PIC access cell chromosomes during cell division. The third step, termed strand transfer, the integrase protein joins the previously processed 3' ends to the 5'-ends of strands of target cellular DNA at the site of integration. The 5'-ends are produced by integrase-catalyzed staggered cuts, 5 bp apart. A Y-shaped, gapped, recombination intermediate results, with the 5'-ends of the viral DNA strands and the 3' ends of target DNA strands remaining unjoined, flanking a gap of 5 bp. The last step is viral DNA integration into host chromosome. This involves host DNA repair synthesis in which the 5 bp gaps between the unjoined strands (see above) are filled in and then ligated. The protein is Gag-Pro-Pol polyprotein (gag-pro-pol) of Human T-cell leukemia virus 3 (strain 2026ND) (HTLV-3).